A 295-amino-acid polypeptide reads, in one-letter code: GTPase Era (295 aa).

The 170-residue stretch at 7-176 (KTVSVCIIGR…ITSKAKIAPW (170 aa)) folds into the Era-type G domain. Residues 15–22 (GRPNSGKS) are G1. Residue 15–22 (GRPNSGKS) coordinates GTP. The segment at 41-45 (QTTRS) is G2. The G3 stretch occupies residues 62–65 (DTPG). GTP is bound by residues 62 to 66 (DTPGI) and 124 to 127 (NKID). Residues 124-127 (NKID) form a G4 region. A G5 region spans residues 152–154 (ISA). The region spanning 204–281 (LQQELPYKLT…HLFLFVKVQE (78 aa)) is the KH type-2 domain.

The protein belongs to the TRAFAC class TrmE-Era-EngA-EngB-Septin-like GTPase superfamily. Era GTPase family. In terms of assembly, monomer.

Its subcellular location is the cytoplasm. The protein localises to the cell inner membrane. An essential GTPase that binds both GDP and GTP, with rapid nucleotide exchange. Plays a role in 16S rRNA processing and 30S ribosomal subunit biogenesis and possibly also in cell cycle regulation and energy metabolism. The chain is GTPase Era from Rickettsia bellii (strain RML369-C).